Here is a 367-residue protein sequence, read N- to C-terminus: GDP-perosamine synthase (367 aa).

Position 181 is an N6-(pyridoxal phosphate)lysine (K181).

It belongs to the DegT/DnrJ/EryC1 family. In terms of assembly, homotetramer. Requires pyridoxal 5'-phosphate as cofactor.

The catalysed reaction is GDP-alpha-D-perosamine + 2-oxoglutarate = GDP-4-dehydro-alpha-D-rhamnose + L-glutamate. It functions in the pathway bacterial outer membrane biogenesis; LPS O-antigen biosynthesis. Catalyzes the synthesis of GDP-perosamine from GDP-4-keto-6-deoxy-D-mannose and L-glutamate. Also shows weak activity with L-glutamine. The chain is GDP-perosamine synthase from Vibrio cholerae.